The primary structure comprises 156 residues: Transcriptional repressor NrdR (156 aa).

The segment at 3–34 (CPKCNSTHSRVVDSRHADEVNAIRRRRECEEC) is a zinc-finger region. The ATP-cone domain occupies 49 to 139 (LIVVKKDGTR…VYKEFKDVDQ (91 aa)).

It belongs to the NrdR family. Zn(2+) serves as cofactor.

In terms of biological role, negatively regulates transcription of bacterial ribonucleotide reductase nrd genes and operons by binding to NrdR-boxes. The protein is Transcriptional repressor NrdR of Staphylococcus saprophyticus subsp. saprophyticus (strain ATCC 15305 / DSM 20229 / NCIMB 8711 / NCTC 7292 / S-41).